Here is a 33-residue protein sequence, read N- to C-terminus: GLFDVVKGVLKGVGKNVAGSLLEQLKCKLSGGC.

Cys-27 and Cys-33 are joined by a disulfide.

Expressed by the skin glands.

The protein localises to the secreted. Antimicrobial peptide. A mixture of Brevinin-2DYc/2DYd is active against the Gram-positive bacterium S.aureus (MIC=15 uM) and the Gram-negative bacterium E.coli (MIC=15 uM). This chain is Brevinin-2DYc, found in Rana dybowskii (Dybovsky's frog).